The chain runs to 349 residues: Inositol 2-dehydrogenase (349 aa).

It belongs to the Gfo/Idh/MocA family. As to quaternary structure, homotetramer.

It catalyses the reaction myo-inositol + NAD(+) = scyllo-inosose + NADH + H(+). Functionally, involved in the oxidation of myo-inositol (MI) to 2-keto-myo-inositol (2KMI or 2-inosose). The sequence is that of Inositol 2-dehydrogenase from Mycolicibacterium gilvum (strain PYR-GCK) (Mycobacterium gilvum (strain PYR-GCK)).